The sequence spans 503 residues: Probable mitochondrial-processing peptidase subunit alpha-1, mitochondrial (503 aa).

Residues 1 to 59 (MYRTAASRARALKGVLTRSLRPARYASSSAVAETSSSTPAYLSWLSGGSRAALTSLDMP) constitute a mitochondrion transit peptide.

It belongs to the peptidase M16 family. As to quaternary structure, heterodimer of alpha and beta subunits, forming the mitochondrial processing protease (MPP) in which subunit alpha is involved in substrate recognition and binding and subunit beta is the catalytic subunit. Component of the ubiquinol-cytochrome c oxidoreductase (cytochrome b-c1 complex, complex III, CIII), a multisubunit enzyme composed of 10 subunits. The complex is composed of 3 respiratory subunits cytochrome b (MT-CYB), cytochrome c1 (CYC1-1 or CYC1-2) and Rieske protein (UCR1-1 or UCR1-2), 2 core protein subunits MPPalpha1 (or MPPalpha2) and MPPB, and 5 low-molecular weight protein subunits QCR7-1 (or QCR7-2), UCRQ-1 (or UCRQ-2), QCR9, UCRY and probably QCR6-1 (or QCR6-2). The complex exists as an obligatory dimer and forms supercomplexes (SCs) in the inner mitochondrial membrane with NADH-ubiquinone oxidoreductase (complex I, CI), resulting in different assemblies (supercomplexes SCI(1)III(2) and SCI(2)III(4)).

It is found in the mitochondrion matrix. Its subcellular location is the mitochondrion inner membrane. In terms of biological role, substrate recognition and binding subunit of the essential mitochondrial processing protease (MPP), which cleaves the mitochondrial sequence off newly imported precursors proteins. Its function is as follows. Component of the ubiquinol-cytochrome c oxidoreductase, a multisubunit transmembrane complex that is part of the mitochondrial electron transport chain which drives oxidative phosphorylation. The respiratory chain contains 3 multisubunit complexes succinate dehydrogenase (complex II, CII), ubiquinol-cytochrome c oxidoreductase (cytochrome b-c1 complex, complex III, CIII) and cytochrome c oxidase (complex IV, CIV), that cooperate to transfer electrons derived from NADH and succinate to molecular oxygen, creating an electrochemical gradient over the inner membrane that drives transmembrane transport and the ATP synthase. The cytochrome b-c1 complex catalyzes electron transfer from ubiquinol to cytochrome c, linking this redox reaction to translocation of protons across the mitochondrial inner membrane, with protons being carried across the membrane as hydrogens on the quinol. In the process called Q cycle, 2 protons are consumed from the matrix, 4 protons are released into the intermembrane space and 2 electrons are passed to cytochrome c. The chain is Probable mitochondrial-processing peptidase subunit alpha-1, mitochondrial (MPPalpha1) from Arabidopsis thaliana (Mouse-ear cress).